Reading from the N-terminus, the 188-residue chain is Elongation factor P (188 aa).

Residue lysine 34 is modified to N6-(3,6-diaminohexanoyl)-5-hydroxylysine.

The protein belongs to the elongation factor P family. Post-translationally, may be beta-lysylated on the epsilon-amino group of Lys-34 by the combined action of EpmA and EpmB, and then hydroxylated on the C5 position of the same residue by EpmC (if this protein is present). Lysylation is critical for the stimulatory effect of EF-P on peptide-bond formation. The lysylation moiety may extend toward the peptidyltransferase center and stabilize the terminal 3-CCA end of the tRNA. Hydroxylation of the C5 position on Lys-34 may allow additional potential stabilizing hydrogen-bond interactions with the P-tRNA.

It is found in the cytoplasm. It participates in protein biosynthesis; polypeptide chain elongation. In terms of biological role, involved in peptide bond synthesis. Alleviates ribosome stalling that occurs when 3 or more consecutive Pro residues or the sequence PPG is present in a protein, possibly by augmenting the peptidyl transferase activity of the ribosome. Modification of Lys-34 is required for alleviation. The polypeptide is Elongation factor P (Actinobacillus pleuropneumoniae serotype 5b (strain L20)).